The following is a 293-amino-acid chain: Aromatic amino acid exporter YddG (293 aa).

Topologically, residues 1–6 (MTRQKA) are cytoplasmic. An EamA 1 domain is found at 6–137 (ATLIGLIAIV…LALVGVCWVL (132 aa)). A helical transmembrane segment spans residues 7 to 27 (TLIGLIAIVLWSTMVGLIRGV). The Periplasmic portion of the chain corresponds to 28 to 33 (SEGLGP). Residues 34–54 (VGGAAAIYSLSGLLLIFTVGF) traverse the membrane as a helical segment. At 55–62 (PRIRQIPK) the chain is on the cytoplasmic side. Residues 63 to 83 (GYLLAGSLLFVSYEICLALSL) traverse the membrane as a helical segment. Over 84 to 92 (GYAATHHQA) the chain is Periplasmic. A helical transmembrane segment spans residues 93-113 (IEVGMVNYLWPSLTILFAILF). At 114–118 (NGQKT) the chain is on the cytoplasmic side. Residues 119-139 (NWLIVPGLLLALVGVCWVLGG) traverse the membrane as a helical segment. Over 140-155 (DNGLHYDEIINNITTS) the chain is Periplasmic. The chain crosses the membrane as a helical span at residues 156-176 (PLSYFLAFIGAFIWAAYCTVT). The EamA 2 domain occupies 158 to 285 (SYFLAFIGAF…ALMVCGGSLL (128 aa)). Over 177-182 (NKYARG) the chain is Cytoplasmic. The chain crosses the membrane as a helical span at residues 183–203 (FNGITVFVLLTGASLWVYYFL). At 204-218 (TPQPEMIFSTPVMIK) the chain is on the periplasmic side. The chain crosses the membrane as a helical span at residues 219 to 239 (LISAAFTLGFAYAAWNVGILH). The Cytoplasmic segment spans residues 240 to 243 (GNVT). The helical transmembrane segment at 244-264 (IMAVGSYFTPVLSSALAAVLL) threads the bilayer. Residues 265 to 267 (SAP) are Periplasmic-facing. Residues 268–288 (LSFSFWQGALMVCGGSLLCWL) traverse the membrane as a helical segment. Residues 289–293 (ATRRG) are Cytoplasmic-facing.

Belongs to the drug/metabolite transporter (DMT) superfamily. Aromatic amino acid/paraquat exporter (ArAA/P-E) (TC 2.A.7.17) family.

The protein localises to the cell inner membrane. The catalysed reaction is L-phenylalanine(in) = L-phenylalanine(out). It carries out the reaction L-tyrosine(in) = L-tyrosine(out). It catalyses the reaction L-tryptophan(in) = L-tryptophan(out). The enzyme catalyses L-threonine(in) = L-threonine(out). The catalysed reaction is L-methionine(in) = L-methionine(out). It carries out the reaction L-lysine(in) = L-lysine(out). It catalyses the reaction L-glutamate(out) = L-glutamate(in). The enzyme catalyses L-valine(in) = L-valine(out). The catalysed reaction is L-isoleucine(in) = L-isoleucine(out). Functionally, amino acid transporter with broad substrate specificity. Can transport various amino acids, including phenylalanine, tyrosine, tryptophan, L-threonine, L-methionine, L-lysine, L-glutamate, L-valine and L-isoleucine. Overexpression confers resistance to phenylalanine and increases export of phenylalanine, tyrosine and tryptophan. This chain is Aromatic amino acid exporter YddG (yddG), found in Escherichia coli (strain K12).